The sequence spans 294 residues: Probable 2-(5''-triphosphoribosyl)-3'-dephosphocoenzyme-A synthase (294 aa).

This sequence belongs to the CitG/MdcB family.

It carries out the reaction 3'-dephospho-CoA + ATP = 2'-(5''-triphospho-alpha-D-ribosyl)-3'-dephospho-CoA + adenine. This chain is Probable 2-(5''-triphosphoribosyl)-3'-dephosphocoenzyme-A synthase, found in Streptococcus pyogenes serotype M28 (strain MGAS6180).